The primary structure comprises 358 residues: Peptide chain release factor 1 (358 aa).

N5-methylglutamine is present on Gln235.

This sequence belongs to the prokaryotic/mitochondrial release factor family. Post-translationally, methylated by PrmC. Methylation increases the termination efficiency of RF1.

The protein resides in the cytoplasm. Functionally, peptide chain release factor 1 directs the termination of translation in response to the peptide chain termination codons UAG and UAA. The chain is Peptide chain release factor 1 from Neisseria meningitidis serogroup C (strain 053442).